Reading from the N-terminus, the 127-residue chain is Large ribosomal subunit protein uL18 (127 aa).

The interval 1–26 (MASTLTVRKSLSDRAKARARRQARGR) is disordered. Residues 17 to 26 (ARARRQARGR) are compositionally biased toward basic residues.

The protein belongs to the universal ribosomal protein uL18 family. Part of the 50S ribosomal subunit; part of the 5S rRNA/L5/L18/L25 subcomplex. Contacts the 5S and 23S rRNAs.

Its function is as follows. This is one of the proteins that bind and probably mediate the attachment of the 5S RNA into the large ribosomal subunit, where it forms part of the central protuberance. This chain is Large ribosomal subunit protein uL18, found in Cutibacterium acnes (strain DSM 16379 / KPA171202) (Propionibacterium acnes).